The primary structure comprises 337 residues: Biotin synthase (337 aa).

Residues 52–281 (ADIQRASLLS…RSRVRLSAGR (230 aa)) enclose the Radical SAM core domain. [4Fe-4S] cluster is bound by residues C67, C71, and C74. [2Fe-2S] cluster is bound by residues C112, C144, C204, and R276.

The protein belongs to the radical SAM superfamily. Biotin synthase family. In terms of assembly, homodimer. Requires [4Fe-4S] cluster as cofactor. The cofactor is [2Fe-2S] cluster.

The catalysed reaction is (4R,5S)-dethiobiotin + (sulfur carrier)-SH + 2 reduced [2Fe-2S]-[ferredoxin] + 2 S-adenosyl-L-methionine = (sulfur carrier)-H + biotin + 2 5'-deoxyadenosine + 2 L-methionine + 2 oxidized [2Fe-2S]-[ferredoxin]. It participates in cofactor biosynthesis; biotin biosynthesis; biotin from 7,8-diaminononanoate: step 2/2. Functionally, catalyzes the conversion of dethiobiotin (DTB) to biotin by the insertion of a sulfur atom into dethiobiotin via a radical-based mechanism. This is Biotin synthase from Methylobacterium radiotolerans (strain ATCC 27329 / DSM 1819 / JCM 2831 / NBRC 15690 / NCIMB 10815 / 0-1).